The chain runs to 265 residues: Type III pantothenate kinase (265 aa).

6–13 (DVGNTNIV) contacts ATP. 112-115 (GADR) contributes to the substrate binding site. Asp-114 (proton acceptor) is an active-site residue. Residue Asp-134 coordinates K(+). Thr-137 is a binding site for ATP. Residue Thr-189 participates in substrate binding.

It belongs to the type III pantothenate kinase family. In terms of assembly, homodimer. NH4(+) is required as a cofactor. It depends on K(+) as a cofactor.

The protein resides in the cytoplasm. It carries out the reaction (R)-pantothenate + ATP = (R)-4'-phosphopantothenate + ADP + H(+). It functions in the pathway cofactor biosynthesis; coenzyme A biosynthesis; CoA from (R)-pantothenate: step 1/5. Functionally, catalyzes the phosphorylation of pantothenate (Pan), the first step in CoA biosynthesis. This Saccharopolyspora erythraea (strain ATCC 11635 / DSM 40517 / JCM 4748 / NBRC 13426 / NCIMB 8594 / NRRL 2338) protein is Type III pantothenate kinase.